The following is a 257-amino-acid chain: Ribonuclease HII (257 aa).

The region spanning 72 to 257 (TYIAGIDEVG…FAPIKDMIQK (186 aa)) is the RNase H type-2 domain. A divalent metal cation-binding residues include D78, E79, and D170.

It belongs to the RNase HII family. Mn(2+) serves as cofactor. Mg(2+) is required as a cofactor.

Its subcellular location is the cytoplasm. It catalyses the reaction Endonucleolytic cleavage to 5'-phosphomonoester.. Functionally, endonuclease that specifically degrades the RNA of RNA-DNA hybrids. The chain is Ribonuclease HII from Bacillus mycoides (strain KBAB4) (Bacillus weihenstephanensis).